Reading from the N-terminus, the 39-residue chain is Cytochrome b559 subunit beta (39 aa).

A helical transmembrane segment spans residues 14-30; that stretch reads WLAIHGLAVPTVFFLGS. Heme is bound at residue His-18.

In terms of assembly, heterodimer of an alpha subunit and a beta subunit. PSII is composed of 1 copy each of membrane proteins PsbA, PsbB, PsbC, PsbD, PsbE, PsbF, PsbH, PsbI, PsbJ, PsbK, PsbL, PsbM, PsbT, PsbX, PsbY, PsbZ, Psb30/Ycf12, at least 3 peripheral proteins of the oxygen-evolving complex and a large number of cofactors. It forms dimeric complexes. It depends on heme b as a cofactor. The N-terminus is blocked.

It is found in the plastid. The protein resides in the chloroplast thylakoid membrane. In terms of biological role, this b-type cytochrome is tightly associated with the reaction center of photosystem II (PSII). PSII is a light-driven water:plastoquinone oxidoreductase that uses light energy to abstract electrons from H(2)O, generating O(2) and a proton gradient subsequently used for ATP formation. It consists of a core antenna complex that captures photons, and an electron transfer chain that converts photonic excitation into a charge separation. The protein is Cytochrome b559 subunit beta of Spinacia oleracea (Spinach).